The sequence spans 813 residues: Glycerol-3-phosphate acyltransferase (813 aa).

The HXXXXD motif signature appears at 304 to 309 (CHRSHI).

It belongs to the GPAT/DAPAT family.

The protein resides in the cell inner membrane. It carries out the reaction sn-glycerol 3-phosphate + an acyl-CoA = a 1-acyl-sn-glycero-3-phosphate + CoA. It participates in phospholipid metabolism; CDP-diacylglycerol biosynthesis; CDP-diacylglycerol from sn-glycerol 3-phosphate: step 1/3. The protein is Glycerol-3-phosphate acyltransferase of Actinobacillus succinogenes (strain ATCC 55618 / DSM 22257 / CCUG 43843 / 130Z).